A 264-amino-acid polypeptide reads, in one-letter code: S-adenosylmethionine decarboxylase proenzyme (264 aa).

Serine 114 functions as the Schiff-base intermediate with substrate; via pyruvic acid in the catalytic mechanism. Serine 114 carries the post-translational modification Pyruvic acid (Ser); by autocatalysis. The active-site Proton acceptor; for processing activity is the histidine 119. Cysteine 142 serves as the catalytic Proton donor; for catalytic activity.

It belongs to the prokaryotic AdoMetDC family. Type 2 subfamily. Heterooctamer of four alpha and four beta chains arranged as a tetramer of alpha/beta heterodimers. It depends on pyruvate as a cofactor. In terms of processing, is synthesized initially as an inactive proenzyme. Formation of the active enzyme involves a self-maturation process in which the active site pyruvoyl group is generated from an internal serine residue via an autocatalytic post-translational modification. Two non-identical subunits are generated from the proenzyme in this reaction, and the pyruvate is formed at the N-terminus of the alpha chain, which is derived from the carboxyl end of the proenzyme. The post-translation cleavage follows an unusual pathway, termed non-hydrolytic serinolysis, in which the side chain hydroxyl group of the serine supplies its oxygen atom to form the C-terminus of the beta chain, while the remainder of the serine residue undergoes an oxidative deamination to produce ammonia and the pyruvoyl group blocking the N-terminus of the alpha chain.

It carries out the reaction S-adenosyl-L-methionine + H(+) = S-adenosyl 3-(methylsulfanyl)propylamine + CO2. It participates in amine and polyamine biosynthesis; S-adenosylmethioninamine biosynthesis; S-adenosylmethioninamine from S-adenosyl-L-methionine: step 1/1. Functionally, catalyzes the decarboxylation of S-adenosylmethionine to S-adenosylmethioninamine (dcAdoMet), the propylamine donor required for the synthesis of the polyamines spermine and spermidine from the diamine putrescine. The protein is S-adenosylmethionine decarboxylase proenzyme of Chromohalobacter salexigens (strain ATCC BAA-138 / DSM 3043 / CIP 106854 / NCIMB 13768 / 1H11).